The sequence spans 336 residues: tRNA N6-adenosine threonylcarbamoyltransferase (336 aa).

Residues H115 and H119 each coordinate Fe cation. Substrate contacts are provided by residues 137–141, D170, G183, D187, and N276; that span reads LVSGG. D302 contributes to the Fe cation binding site.

The protein belongs to the KAE1 / TsaD family. Fe(2+) serves as cofactor.

It localises to the cytoplasm. The enzyme catalyses L-threonylcarbamoyladenylate + adenosine(37) in tRNA = N(6)-L-threonylcarbamoyladenosine(37) in tRNA + AMP + H(+). Functionally, required for the formation of a threonylcarbamoyl group on adenosine at position 37 (t(6)A37) in tRNAs that read codons beginning with adenine. Is involved in the transfer of the threonylcarbamoyl moiety of threonylcarbamoyl-AMP (TC-AMP) to the N6 group of A37, together with TsaE and TsaB. TsaD likely plays a direct catalytic role in this reaction. The sequence is that of tRNA N6-adenosine threonylcarbamoyltransferase from Streptococcus suis (strain 98HAH33).